The following is an 89-amino-acid chain: Small ribosomal subunit protein uS17 (89 aa).

Belongs to the universal ribosomal protein uS17 family. Part of the 30S ribosomal subunit.

One of the primary rRNA binding proteins, it binds specifically to the 5'-end of 16S ribosomal RNA. The chain is Small ribosomal subunit protein uS17 from Albidiferax ferrireducens (strain ATCC BAA-621 / DSM 15236 / T118) (Rhodoferax ferrireducens).